The chain runs to 504 residues: Cytochrome P450 2S1 (504 aa).

Heme is bound at residue cysteine 440.

Belongs to the cytochrome P450 family. It depends on heme as a cofactor. In terms of tissue distribution, expressed at higher levels in extrahepatic tissues including trachea, lung, stomach, small intestine, colon, kidney, breast, placenta and spleen. Expressed in peripheral blood leukocytes. Constitutively expressed in skin (at protein level).

The protein resides in the endoplasmic reticulum membrane. The protein localises to the microsome membrane. It carries out the reaction all-trans-retinoate + reduced [NADPH--hemoprotein reductase] + O2 = all-trans-5,6-epoxyretinoate + oxidized [NADPH--hemoprotein reductase] + H2O + H(+). It catalyses the reaction all-trans-retinoate + reduced [NADPH--hemoprotein reductase] + O2 = all-trans-4-hydroxyretinoate + oxidized [NADPH--hemoprotein reductase] + H2O + H(+). The enzyme catalyses (5S)-hydroperoxy-(6E,8Z,11Z,14Z)-eicosatetraenoate = 5-oxo-(6E,8Z,11Z,14Z)-eicosatetraenoate + H2O. The catalysed reaction is (12S)-hydroperoxy-(5Z,8Z,10E,14Z)-eicosatetraenoate = 12-oxo-(5Z,8Z,10E,14Z)-eicosatetraenoate + H2O. It carries out the reaction (15S)-hydroperoxy-(5Z,8Z,11Z,13E)-eicosatetraenoate = 15-oxo-(5Z,8Z,11Z,13E)-eicosatetraenoate + H2O. It catalyses the reaction prostaglandin H2 = thromboxane A2. The enzyme catalyses prostaglandin H2 = (12S)-hydroxy-(5Z,8E,10E)-heptadecatrienoate + malonaldehyde. The catalysed reaction is (13S)-hydroperoxy-(9Z,11E)-octadecadienoate = 13-oxo-(9Z,11E)-octadecadienoate + H2O. It participates in lipid metabolism; fatty acid metabolism. A cytochrome P450 monooxygenase involved in the metabolism of retinoids and eicosanoids. In epidermis, may contribute to the oxidative metabolism of all-trans-retinoic acid. For this activity, uses molecular oxygen inserting one oxygen atom into a substrate, and reducing the second into a water molecule, with two electrons provided by NADPH via cytochrome P450 reductase (NADPH--hemoprotein reductase). Additionally, displays peroxidase and isomerase activities toward various oxygenated eicosanoids such as prostaglandin H2 (PGH2) and hydroperoxyeicosatetraenoates (HPETEs). Independently of cytochrome P450 reductase, NADPH, and O2, catalyzes the breakdown of PGH2 to hydroxyheptadecatrienoic acid (HHT) and malondialdehyde (MDA), which is known to act as a mediator of DNA damage. The chain is Cytochrome P450 2S1 from Homo sapiens (Human).